Consider the following 143-residue polypeptide: Large ribosomal subunit protein uL11 (143 aa).

The protein belongs to the universal ribosomal protein uL11 family. As to quaternary structure, part of the ribosomal stalk of the 50S ribosomal subunit. Interacts with L10 and the large rRNA to form the base of the stalk. L10 forms an elongated spine to which L12 dimers bind in a sequential fashion forming a multimeric L10(L12)X complex. In terms of processing, one or more lysine residues are methylated.

Functionally, forms part of the ribosomal stalk which helps the ribosome interact with GTP-bound translation factors. This Paraburkholderia phymatum (strain DSM 17167 / CIP 108236 / LMG 21445 / STM815) (Burkholderia phymatum) protein is Large ribosomal subunit protein uL11.